Reading from the N-terminus, the 336-residue chain is Isethionate-binding periplasmic protein DctP (336 aa).

The first 23 residues, 1 to 23, serve as a signal peptide directing secretion; it reads MKHLLKAGALVALACIVTLTAGA.

Belongs to the bacterial solute-binding protein 7 family. The complex comprises the periplasmic solute receptor protein DctP, and the fused transmembrane protein DctMQ.

It is found in the periplasm. The catalysed reaction is 2-hydroxyethane-1-sulfonate(out) + Na(+)(out) = 2-hydroxyethane-1-sulfonate(in) + Na(+)(in). It participates in organosulfur degradation; alkanesulfonate degradation. Its function is as follows. Part of the tripartite ATP-independent periplasmic (TRAP) transport system DctPQM involved in the uptake of isethionate (2-hydroxyethanesulfonate), which is then catabolized by enzymes encoded by adjacent genes in the locus. The DctP subunit is the solute-binding protein. Thereby is involved in an anaerobic respiration pathway that converts the sulfonate isethionate to ammonia, acetate and sulfide. The chain is Isethionate-binding periplasmic protein DctP from Oleidesulfovibrio alaskensis (strain ATCC BAA-1058 / DSM 17464 / G20) (Desulfovibrio alaskensis).